Reading from the N-terminus, the 483-residue chain is MGVLSPTRTMRLWGPRSLGVALGVFMTIGFALQLLGGPFQRRLPGLQLRHSWASSLGPAAPSCPPRQHLVFLKTHKSGSSSVLSLLHRYGDRHGLRFALPARYQFGYPRLFQASRVKGYRPQSGGTQPPFHILCHHMRFNLKEVLQVMPSDSFFFSIVRDPAALARSAFSYYKSTSSAFRKAPSLAAFLANPRAFYRPGARGDHYARNLLWFDFGLPFPPELRTKRGNPHVSRDPNPPQLPSGAGPPAHTLDPNALFHPVPIVADGHSQMSSPASLDLGSSSFIQWNLAWLDSVFDLVLVAEYFDESLVLLADALCWGLDDVVGFMHNAQAGGGQDRSTIDDGGLTTEERQLTARARAWNNLDWALYVHFNRSLWARIKQYGQSRLDSAVAELRARREALAKHCLVGGEALDPKYITDRRFRPFQFGSGKVLGYVLRSGLSLQDQEECERLATPELQYKDKLDAKQFPPTVSLPLKTSRRPSP.

At 1–18 (MGVLSPTRTMRLWGPRSL) the chain is on the cytoplasmic side. The helical; Signal-anchor for type II membrane protein transmembrane segment at 19-39 (GVALGVFMTIGFALQLLGGPF) threads the bilayer. At 40 to 483 (QRRLPGLQLR…PLKTSRRPSP (444 aa)) the chain is on the lumenal side. A disordered region spans residues 225–248 (KRGNPHVSRDPNPPQLPSGAGPPA). N-linked (GlcNAc...) asparagine glycosylation occurs at Asn371.

This sequence belongs to the galactose-3-O-sulfotransferase family. Mn(2+) is required as a cofactor.

It is found in the golgi apparatus. The protein localises to the golgi stack membrane. It functions in the pathway protein modification; carbohydrate sulfation. In terms of biological role, catalyzes the transfer of sulfate to beta-1,3-linked galactose residues in O-linked glycoproteins. Good substrates include asialofetuin, Gal-beta-1,3-GalNAc and Gal-beta-1,3 (GlcNAc-beta-1,6)GalNAc. In Bos taurus (Bovine), this protein is Galactose-3-O-sulfotransferase 4 (GAL3ST4).